The chain runs to 793 residues: Tripartite terminase subunit 1 (793 aa).

Residues 206-234 (CSVCFEELCVTANSGDSTHKRIVRKICDH) form a C3H1-type zinc finger. 697–704 (FSSVFKCG) provides a ligand contact to ATP.

This sequence belongs to the herpesviridae TRM1 protein family. Associates with TRM2 and TRM3 to form the tripartite terminase complex. Interacts with portal protein.

It is found in the host nucleus. In terms of biological role, component of the molecular motor that translocates viral genomic DNA in empty capsid during DNA packaging. Forms a tripartite terminase complex together with TRM2 and TRM3 in the host cytoplasm. Once the complex reaches the host nucleus, it interacts with the capsid portal vertex. This portal forms a ring in which genomic DNA is translocated into the capsid. TRM1 carries an endonuclease activity that plays an important role for the cleavage of concatemeric viral DNA into unit length genomes. The polypeptide is Tripartite terminase subunit 1 (Gallid herpesvirus 2 (strain Chicken/Md5/ATCC VR-987) (GaHV-2)).